Reading from the N-terminus, the 81-residue chain is Acyl carrier protein (81 aa).

Positions 2–80 constitute a Carrier domain; sequence SKVDNIEQKV…DVVNYIKEHK (79 aa). Position 40 is an O-(pantetheine 4'-phosphoryl)serine (serine 40).

It belongs to the acyl carrier protein (ACP) family. In terms of processing, 4'-phosphopantetheine is transferred from CoA to a specific serine of apo-ACP by AcpS. This modification is essential for activity because fatty acids are bound in thioester linkage to the sulfhydryl of the prosthetic group.

The protein resides in the cytoplasm. The protein operates within lipid metabolism; fatty acid biosynthesis. Functionally, carrier of the growing fatty acid chain in fatty acid biosynthesis. The chain is Acyl carrier protein from Rickettsia bellii (strain OSU 85-389).